The following is a 263-amino-acid chain: MGIYMRDDILDIITLTTDFGTNEGYVGAMKGRILNILKKYNKDAKIIDISHEIKPFNIYHGAYVLLTAIPYFPPSVHVAVIDPTVGSERKSIVIETKSGYYLVGPDNGLFTYVAEKLGIKRIIKIDEERYKPSSTFHGRDVYAVVGAEILINNGYDGEELDEMVKIDETKKRVIHIDRFGNIITNIKKDEVTFKYYDTIMIKIRHKNGIEKIIKCKFVKSYFEEKNNFICLINSEGFLEISKFMDNASKLLNVDYLDEIEIIY.

Adenosine is bound by residues Asp18, Asp82, and Asn181. 5 residues coordinate (R)-S-adenosyl-L-methionine: Asn181, Tyr221, Ser234, Glu239, and Met244.

It belongs to the SAM hydrolase / SAM-dependent halogenase family. In terms of assembly, homotrimer.

The catalysed reaction is (R)-S-adenosyl-L-methionine + H2O = adenosine + L-methionine + H(+). Functionally, catalyzes the hydrolysis of S-adenosyl-L-methionine (SAM) into adenosine and L-methionine. Does not have chlorinase or fluorinase activity. The polypeptide is (R)-S-adenosyl-L-methionine hydrolase (Methanocaldococcus jannaschii (strain ATCC 43067 / DSM 2661 / JAL-1 / JCM 10045 / NBRC 100440) (Methanococcus jannaschii)).